The following is a 434-amino-acid chain: MAAADIARQVGEDCRTVPLAGHVGFDSLPDQLVNKSVSQGFCFNILCVGETGLGKSTLMDTLFNTKFEGEPATHTQPGVQLQSNTYDLQESNVGLKLTIVSTVGFGDQINKEDSYKPIVEFIDAQFEAYLQEELKIRRVLHSYHDSRIHVCLYFIAPTGHSLKSLDLVTMKKLDSKVNIIPVIAKSDAISKSELAKFKIKITSELVSNGVQIYQFPTDDESVSEINGTMNAHLPFAVVGSTEEVKIGNKMMRARQYPWGTVQVENEAHCDFVKLREMLIRVNMEDLREQTHARHYELYRRCKLEEMGFKDTDPDSKPFSLQETYEAKRNEFLGELQKKEEEMRQMFVQRVKEKEAELKEAEKELHEKFDRLKKLHQEEKKKLEDKKKCLDEEMNAFKQRKAAAELLQSQGSQAGGSQTLKRDKEKKNNPWLCIE.

At A2 the chain carries N-acetylalanine. S27 bears the Phosphoserine mark. The region spanning 39–305 (QGFCFNILCV…ELYRRCKLEE (267 aa)) is the Septin-type G domain. Positions 49 to 56 (GETGLGKS) are G1 motif. Residues 49 to 56 (GETGLGKS), G104, 185 to 193 (KSDAISKSE), G239, and R254 each bind GTP. Residues 101 to 104 (STVG) are G3 motif. The segment at 184-187 (AKSD) is G4 motif. The stretch at 321 to 407 (QETYEAKRNE…QRKAAAELLQ (87 aa)) forms a coiled coil. N6-acetyllysine is present on K367. The tract at residues 403 to 434 (AELLQSQGSQAGGSQTLKRDKEKKNNPWLCIE) is disordered. A compositionally biased stretch (low complexity) spans 407–417 (QSQGSQAGGSQ). Residue S416 is modified to Phosphoserine. Phosphothreonine is present on T418.

Belongs to the TRAFAC class TrmE-Era-EngA-EngB-Septin-like GTPase superfamily. Septin GTPase family. As to quaternary structure, septins polymerize into heterooligomeric protein complexes that form filaments, and associate with cellular membranes, actin filaments and microtubules. GTPase activity is required for filament formation. Filaments are assembled from asymmetrical heterotrimers, composed of SEPTIN2, SEPTIN6 and SEPTIN7 that associate head-to-head to form a hexameric unit. Within the trimer, directly interacts with SEPTIN2 and SEPTIN7. Also interacts with SEPTIN9 and SEPTIN12. Interaction with SEPTIN12 alters filament structure. Component of a septin core octameric complex consisting of SEPTIN12, SEPTIN7, SEPTIN6 and SEPTIN2 or SEPTIN4 in the order 12-7-6-2-2-6-7-12 or 12-7-6-4-4-6-7-12 and located in the sperm annulus. Interacts with SOCS7. Interacts with HNRNPA1. As to expression, expressed in the cerebral cortex (at protein level). Associated with synaptic vesicles in various brain regions, including glomeruli of the olfactory bulb (at protein level).

It is found in the cytoplasm. Its subcellular location is the cytoskeleton. The protein resides in the spindle. The protein localises to the chromosome. It localises to the centromere. It is found in the kinetochore. Its subcellular location is the cleavage furrow. The protein resides in the midbody. The protein localises to the cell projection. It localises to the cilium. It is found in the flagellum. In terms of biological role, filament-forming cytoskeletal GTPase. Required for normal organization of the actin cytoskeleton. Involved in cytokinesis. Forms a filamentous structure with SEPTIN12, SEPTIN6, SEPTIN2 and probably SEPTIN4 at the sperm annulus which is required for the structural integrity and motility of the sperm tail during postmeiotic differentiation. The sequence is that of Septin-6 from Mus musculus (Mouse).